Here is a 342-residue protein sequence, read N- to C-terminus: Uricase (342 aa).

Residues K35 and T80 each act as charge relay system in the active site. Urate-binding residues include T80, D81, F204, R221, V269, Q270, and N296. H298 functions as the Charge relay system in the catalytic mechanism. The Microbody targeting signal motif lies at 340–342; it reads SHL.

This sequence belongs to the uricase family. As to expression, malpighian tubules.

It is found in the peroxisome. The catalysed reaction is urate + O2 + H2O = 5-hydroxyisourate + H2O2. Its pathway is purine metabolism; urate degradation; (S)-allantoin from urate: step 1/3. Repressed by 20-hydroxyecdysone. Catalyzes the oxidation of uric acid to 5-hydroxyisourate, which is further processed to form (S)-allantoin. The chain is Uricase (Uro) from Drosophila virilis (Fruit fly).